The chain runs to 226 residues: Glutathione peroxidase 3 (226 aa).

Positions 1–24 (MARLLQASCLLSLLLAGFVPQSRG) are cleaved as a signal peptide. Residue Sec-73 is part of the active site. Sec-73 is a non-standard amino acid (selenocysteine).

Belongs to the glutathione peroxidase family. In terms of assembly, homotetramer. In terms of tissue distribution, secreted in plasma.

The protein localises to the secreted. The catalysed reaction is 2 glutathione + H2O2 = glutathione disulfide + 2 H2O. The enzyme catalyses tert-butyl hydroperoxide + 2 glutathione = tert-butanol + glutathione disulfide + H2O. Protects cells and enzymes from oxidative damage, by catalyzing the reduction of hydrogen peroxide, lipid peroxides and organic hydroperoxide, by glutathione. In Pongo pygmaeus (Bornean orangutan), this protein is Glutathione peroxidase 3.